The following is a 177-amino-acid chain: ATP-dependent protease subunit HslV (177 aa).

The active site involves T2. Na(+) contacts are provided by G158, C161, and T164.

Belongs to the peptidase T1B family. HslV subfamily. In terms of assembly, a double ring-shaped homohexamer of HslV is capped on each side by a ring-shaped HslU homohexamer. The assembly of the HslU/HslV complex is dependent on binding of ATP.

The protein localises to the cytoplasm. The catalysed reaction is ATP-dependent cleavage of peptide bonds with broad specificity.. Its activity is regulated as follows. Allosterically activated by HslU binding. Protease subunit of a proteasome-like degradation complex believed to be a general protein degrading machinery. This Pseudomonas aeruginosa (strain LESB58) protein is ATP-dependent protease subunit HslV.